Reading from the N-terminus, the 616-residue chain is Endonuclease 8-like 3 (616 aa).

The FPG-type zinc-finger motif lies at 271 to 305 (KVYKRPNCGQCGTKITVCRLGEHNRMTYFCPKCQK). The RanBP2-type zinc finger occupies 341–370 (KEEHWACAVCTLINKPSDKQCDACLTLRPE). The interval 491–524 (LKTGHTTSNTIHLSSTISSPQSKMTGDAAAKTGN) is disordered. Over residues 494–514 (GHTTSNTIHLSSTISSPQSKM) the composition is skewed to polar residues. Cys527, His530, Cys553, Cys561, Cys574, His576, Cys599, and Cys607 together coordinate Zn(2+). GRF-type zinc fingers lie at residues 527–570 (CSAH…ADLH) and 574–616 (CNHG…AKTE).

This sequence belongs to the FPG family.

The protein resides in the nucleus. It localises to the chromosome. The catalysed reaction is 2'-deoxyribonucleotide-(2'-deoxyribose 5'-phosphate)-2'-deoxyribonucleotide-DNA = a 3'-end 2'-deoxyribonucleotide-(2,3-dehydro-2,3-deoxyribose 5'-phosphate)-DNA + a 5'-end 5'-phospho-2'-deoxyribonucleoside-DNA + H(+). Functionally, DNA glycosylase which prefers single-stranded DNA (ssDNA), or partially ssDNA structures such as bubble and fork structures, to double-stranded DNA (dsDNA). Mediates interstrand cross-link repair in response to replication stress: recruited to replication stress sites via interaction with ubiquitinated CMG helicase and acts by mediating DNA glycosylase activity. Cleaves one of the two N-glycosyl bonds comprising the interstrand cross-link, which avoids the formation of a double-strand break but generates an abasic site that is bypassed by translesion synthesis polymerases. The chain is Endonuclease 8-like 3 from Xenopus laevis (African clawed frog).